A 271-amino-acid polypeptide reads, in one-letter code: 3-methyl-2-oxobutanoate hydroxymethyltransferase 1 (271 aa).

Mg(2+) is bound by residues D53 and D92. 3-methyl-2-oxobutanoate-binding positions include 53-54 (DS), D92, and K120. A Mg(2+)-binding site is contributed by E122. E189 functions as the Proton acceptor in the catalytic mechanism.

Belongs to the PanB family. Homodecamer; pentamer of dimers. The cofactor is Mg(2+).

It localises to the cytoplasm. The catalysed reaction is 3-methyl-2-oxobutanoate + (6R)-5,10-methylene-5,6,7,8-tetrahydrofolate + H2O = 2-dehydropantoate + (6S)-5,6,7,8-tetrahydrofolate. The protein operates within cofactor biosynthesis; (R)-pantothenate biosynthesis; (R)-pantoate from 3-methyl-2-oxobutanoate: step 1/2. In terms of biological role, catalyzes the reversible reaction in which hydroxymethyl group from 5,10-methylenetetrahydrofolate is transferred onto alpha-ketoisovalerate to form ketopantoate. The chain is 3-methyl-2-oxobutanoate hydroxymethyltransferase 1 from Burkholderia cenocepacia (strain HI2424).